We begin with the raw amino-acid sequence, 499 residues long: L-arabinose isomerase (499 aa).

Residues glutamate 306, glutamate 333, histidine 350, and histidine 449 each coordinate Mn(2+).

This sequence belongs to the arabinose isomerase family. Mn(2+) serves as cofactor.

It catalyses the reaction beta-L-arabinopyranose = L-ribulose. The protein operates within carbohydrate degradation; L-arabinose degradation via L-ribulose; D-xylulose 5-phosphate from L-arabinose (bacterial route): step 1/3. Its function is as follows. Catalyzes the conversion of L-arabinose to L-ribulose. The protein is L-arabinose isomerase of Tolumonas auensis (strain DSM 9187 / NBRC 110442 / TA 4).